A 955-amino-acid polypeptide reads, in one-letter code: 2-oxoglutarate dehydrogenase E1 component (955 aa).

It belongs to the alpha-ketoglutarate dehydrogenase family. In terms of assembly, homodimer. Part of the 2-oxoglutarate dehydrogenase (OGDH) complex composed of E1 (2-oxoglutarate dehydrogenase), E2 (dihydrolipoamide succinyltransferase) and E3 (dihydrolipoamide dehydrogenase); the complex contains multiple copies of the three enzymatic components (E1, E2 and E3). The cofactor is thiamine diphosphate.

The catalysed reaction is N(6)-[(R)-lipoyl]-L-lysyl-[protein] + 2-oxoglutarate + H(+) = N(6)-[(R)-S(8)-succinyldihydrolipoyl]-L-lysyl-[protein] + CO2. In terms of biological role, E1 component of the 2-oxoglutarate dehydrogenase (OGDH) complex which catalyzes the decarboxylation of 2-oxoglutarate, the first step in the conversion of 2-oxoglutarate to succinyl-CoA and CO(2). This chain is 2-oxoglutarate dehydrogenase E1 component, found in Bacillus cereus (strain B4264).